Consider the following 379-residue polypeptide: Probable protein arginine N-methyltransferase 6.1 (379 aa).

Residues 1-35 are disordered; that stretch reads MLPSHLNGHSPLARRRPRLSAASPPATGDSDAAAA. A compositionally biased stretch (low complexity) spans 19–35; the sequence is LSAASPPATGDSDAAAA. The 335-residue stretch at 45–379 folds into the SAM-dependent MTase PRMT-type domain; sequence DRIYFQSYSH…FLNIQLDCTM (335 aa). S-adenosyl-L-methionine is bound by residues His-58, Arg-67, Gly-91, Glu-113, and Glu-142. Active-site residues include Glu-156 and Glu-165.

The protein belongs to the class I-like SAM-binding methyltransferase superfamily. Protein arginine N-methyltransferase family. PRMT6 subfamily.

Arginine methyltransferase that can both catalyze the formation of omega-N monomethylarginine (MMA) and asymmetrical dimethylarginine (aDMA). The sequence is that of Probable protein arginine N-methyltransferase 6.1 (PRMT6.1) from Oryza sativa subsp. indica (Rice).